A 305-amino-acid polypeptide reads, in one-letter code: Imidazoleglycerol-phosphate dehydratase (305 aa).

This sequence belongs to the imidazoleglycerol-phosphate dehydratase family.

Its subcellular location is the cytoplasm. The catalysed reaction is D-erythro-1-(imidazol-4-yl)glycerol 3-phosphate = 3-(imidazol-4-yl)-2-oxopropyl phosphate + H2O. The protein operates within amino-acid biosynthesis; L-histidine biosynthesis; L-histidine from 5-phospho-alpha-D-ribose 1-diphosphate: step 6/9. This chain is Imidazoleglycerol-phosphate dehydratase, found in Neisseria meningitidis serogroup C (strain 053442).